The sequence spans 325 residues: ATP synthase gamma chain (325 aa).

It belongs to the ATPase gamma chain family. In terms of assembly, F-type ATPases have 2 components, CF(1) - the catalytic core - and CF(0) - the membrane proton channel. CF(1) has five subunits: alpha(3), beta(3), gamma(1), delta(1), epsilon(1). CF(0) has three main subunits: a, b and c.

It localises to the cell membrane. Its function is as follows. Produces ATP from ADP in the presence of a proton gradient across the membrane. The gamma chain is believed to be important in regulating ATPase activity and the flow of protons through the CF(0) complex. This chain is ATP synthase gamma chain, found in Corynebacterium glutamicum (strain ATCC 13032 / DSM 20300 / JCM 1318 / BCRC 11384 / CCUG 27702 / LMG 3730 / NBRC 12168 / NCIMB 10025 / NRRL B-2784 / 534).